The sequence spans 486 residues: Transcription factor VOZ1 (486 aa).

The VOZ stretch occupies residues 208 to 405 (PPSAFLGPKC…VDGKKTSKGK (198 aa)). 4 residues coordinate Zn(2+): Cys-217, Cys-222, Cys-236, and His-240. The C3H1-type; atypical zinc-finger motif lies at 217–240 (CALWDCPRPAQGFDWFQDYCSSFH). Positions 424 to 445 (EFPPENNTTNTTNNNKRCIKGR) are disordered. The span at 429–438 (NNTTNTTNNN) shows a compositional bias: low complexity.

Homodimer. Interacts with phytochrome B (phyB). As to expression, ubiquitous. Expressed in the vascular bundles of various tissues, specifically in the phloem.

It is found in the cytoplasm. The protein localises to the nucleus. Transcriptional activator acting positively in the phytochrome B signaling pathway. Functions redundantly with VOZ2 to promote flowering downstream of phytochrome B (phyB). Down-regulates 'FLOWERING LOCUS C' (FLC) and up-regulates 'FLOWERING LOCUS T' (FT). Binds to the 38-bp cis-acting region of the AVP1 gene. Interacts with phyB in the cytoplasm and is translocated to the nucleus at signal transmission, where it is subjected to degradation in a phytochrome-dependent manner. In Arabidopsis thaliana (Mouse-ear cress), this protein is Transcription factor VOZ1 (VOZ1).